The sequence spans 536 residues: Global nitrogen regulator NrpR (536 aa).

The interval 7–72 is winged helix-turn-helix; sequence VEILSILSEA…EITEKGIEEL (66 aa). NRD regions lie at residues 80-314 and 315-536; these read RIGS…KGKF and KVTP…YDDI.

Belongs to the NrpR family. In terms of assembly, homotetramer. Binds to a single operator as a dimer and cooperatively to two operators as a dimer pair.

Under nitrogen limitation, binding of the intracellular nitrogen metabolite 2-oxoglutarate to NrpR decreases the binding affinity of NrpR to DNA, leading to initiation of transcription. Functionally, transcriptional repressor of nitrogen fixation and assimilation genes. Binds to two tandem operators in the glnA and nif promoters, thereby blocking transcription of the genes. This chain is Global nitrogen regulator NrpR, found in Methanococcus maripaludis (strain DSM 14266 / JCM 13030 / NBRC 101832 / S2 / LL).